We begin with the raw amino-acid sequence, 743 residues long: Zinc transporter ZIP6 (743 aa).

Residues 1–20 (MARKLSVILILTFALSVTNP) form the signal peptide. The Extracellular segment spans residues 21 to 313 (LHELKAAAFP…PKTYSLQIAW (293 aa)). The N-linked (GlcNAc...) asparagine glycan is linked to Asn-67. The segment covering 96 to 116 (HEHHSDHEHHSDHEHHSDHEH) has biased composition (basic and acidic residues). 2 disordered regions span residues 96 to 174 (HEHH…SASE) and 190 to 245 (LETI…SRNT). Residues 117–132 (HSHRNHAASGKNKRKA) show a composition bias toward basic residues. 2 stretches are compositionally biased toward basic and acidic residues: residues 133–147 (LCPDHDSDSSGKDPR) and 155–167 (HRSEHASGRRNVK). Residues 206–215 (VSSSTPPSVT) show a composition bias toward polar residues. Basic and acidic residues predominate over residues 227–237 (KTNESVSEPRK). Residues Asn-229, Asn-254, and Asn-271 are each glycosylated (N-linked (GlcNAc...) asparagine). The chain crosses the membrane as a helical span at residues 314–334 (VGGFIAISIISFLSLLGVILV). Residues 335–343 (PLMNRVFFK) lie on the Cytoplasmic side of the membrane. The helical transmembrane segment at 344-364 (FLLSFLVALAVGTLSGDAFLH) threads the bilayer. Residues 365-411 (LLPHSHASHHHSHSHEEPAMEMKRGPLFSHLSSQNIEESAYFDSTWK) are Extracellular-facing. A helical transmembrane segment spans residues 412–432 (GLTALGGLYFMFLVEHVLTLI). At 433–645 (KQFKDKKKKN…LKAGMTVKQA (213 aa)) the chain is on the cytoplasmic side. Residues 452-474 (VEIKKQLSKYESQLSTNEEKVDT) are a coiled coil. A phosphoserine mark is found at Ser-459 and Ser-466. Residues 646 to 666 (VLYNALSAMLAYLGMATGIFI) traverse the membrane as a helical segment. The Extracellular segment spans residues 667-674 (GHYAENVS). Residue Asn-672 is glycosylated (N-linked (GlcNAc...) asparagine). The helical transmembrane segment at 675-695 (MWIFALTAGLFMYVALVDMVP) threads the bilayer. At 696–712 (EMLHNDASDHGCSRWGY) the chain is on the cytoplasmic side. The helical transmembrane segment at 713 to 733 (FFLQNAGMLLGFGIMLLISIF) threads the bilayer. Residues 734-743 (EHKIVFRINF) are Extracellular-facing.

This sequence belongs to the ZIP transporter (TC 2.A.5) family. As to quaternary structure, interacts with SLC39A10; which triggers cells to undergo EMT and mitosis. Found in a complex with SLC39A6, SLC39A10 and with the 'Ser-727' phosphorylated form of STAT3 throughout mitosis. Found in a complex with SLC39A6, SLC39A10 and with NCAM1; this complex controls NCAM1 phosphorylation and integration into focal adhesion complexes during epithelial-to-mesenchymal transition (EMT). Found in a complex with SLC39A6, SLC39A10 and with GSK3B that controls NCAM1 phosphorylation. In terms of processing, cleaved on the N-terminus before locating to the plasma membrane. Post-translationally, N-glycosylated. Phosphorylated by ZAP70 in response to TCR stimulation leading to its activation.

It localises to the cell membrane. Its subcellular location is the cell projection. The protein resides in the lamellipodium membrane. The protein localises to the membrane raft. It is found in the apical cell membrane. The catalysed reaction is Zn(2+)(in) = Zn(2+)(out). In terms of biological role, zinc-influx transporter which plays a role in zinc homeostasis and in the induction of epithelial-to-mesenchymal transition (EMT). When associated with SLC39A10, the heterodimer formed by SLC39A10 and SLC39A6 mediates cellular zinc uptake to trigger cells to undergo epithelial- to-mesenchymal transition (EMT). The SLC39A10-SLC39A6 heterodimer also controls NCAM1 phosphorylation and its integration into focal adhesion complexes during EMT. Zinc influx inactivates GSK3B, enabling unphosphorylated SNAI1 in the nucleus to down-regulate adherence genes such as CDH1, causing loss of cell adherence. In addition, the SLC39A10-SLC39A6 heterodimer plays an essentiel role in initiating mitosis by importing zinc into cells to initiate a pathway resulting in the onset of mitosis. Participates in the T-cell receptor signaling regulation by mediating cellular zinc uptake into activated lymphocytes. Regulates the zinc influx necessary for proper meiotic progression to metaphase II (MII) that allows the oocyte-to-egg transition. The sequence is that of Zinc transporter ZIP6 from Pongo abelii (Sumatran orangutan).